The primary structure comprises 130 residues: MVRMNVLADALKCINNAEKRGKRQVLLRPCSKVIIKFLTVMMKHGYIGEFEIVDDHRSGKIVVNLTGRLNKCGVISPRFDVPINDIEKWTNNLLPSRQFGYVVLTTSGGIMDHEEARRKHLGGKILGFFF.

This sequence belongs to the universal ribosomal protein uS8 family.

This Drosophila melanogaster (Fruit fly) protein is Small ribosomal subunit protein uS8A (RpS15Aa).